Consider the following 235-residue polypeptide: Methylosome subunit pICln (235 aa).

Residues 1–21 (MSFLKSFPPPGSAEGLRQQQP) are disordered. Position 2 is an N-acetylserine (Ser2). Ser100, Ser142, Ser191, Ser193, Ser196, and Ser208 each carry phosphoserine. The interval 133–157 (LHPDPEDEDSDDYDGEEYDVEAHEQ) is disordered. Over residues 137 to 151 (PEDEDSDDYDGEEYD) the composition is skewed to acidic residues. A disordered region spans residues 195 to 217 (SSQYNMAGVRTEDSTRDYEDGME). Over residues 204-213 (RTEDSTRDYE) the composition is skewed to basic and acidic residues. Position 221 is a phosphothreonine (Thr221).

Belongs to the pICln (TC 1.A.47) family. Component of the methylosome, a 20S complex containing at least PRMT5/SKB1, WDR77/MEP50 and CLNS1A/pICln. May mediate SNRPD1 and SNRPD3 methylation. Forms a 6S pICln-Sm complex composed of CLNS1A/pICln, SNRPD1, SNRPD2, SNRPE, SNRPF and SNRPG; ring-like structure where CLNS1A/pICln mimics additional Sm proteins and which is unable to assemble into the core snRNP. Interacts with LSM10 and LSM11.

The protein localises to the cytoplasm. It is found in the cytosol. It localises to the nucleus. Its subcellular location is the cytoskeleton. Its function is as follows. Involved in both the assembly of spliceosomal snRNPs and the methylation of Sm proteins. Chaperone that regulates the assembly of spliceosomal U1, U2, U4 and U5 small nuclear ribonucleoproteins (snRNPs), the building blocks of the spliceosome, and thereby plays an important role in the splicing of cellular pre-mRNAs. Most spliceosomal snRNPs contain a common set of Sm proteins SNRPB, SNRPD1, SNRPD2, SNRPD3, SNRPE, SNRPF and SNRPG that assemble in a heptameric protein ring on the Sm site of the small nuclear RNA to form the core snRNP (Sm core). In the cytosol, the Sm proteins SNRPD1, SNRPD2, SNRPE, SNRPF and SNRPG are trapped in an inactive 6S pICln-Sm complex by the chaperone CLNS1A that controls the assembly of the core snRNP. Dissociation by the SMN complex of CLNS1A from the trapped Sm proteins and their transfer to an SMN-Sm complex triggers the assembly of core snRNPs and their transport to the nucleus. This is Methylosome subunit pICln (CLNS1A) from Canis lupus familiaris (Dog).